The primary structure comprises 311 residues: Aspartate carbamoyltransferase catalytic subunit (311 aa).

Residues R55 and T56 each contribute to the carbamoyl phosphate site. K85 provides a ligand contact to L-aspartate. Carbamoyl phosphate contacts are provided by R106, H135, and Q138. Residues R168 and R230 each coordinate L-aspartate. Positions 268 and 269 each coordinate carbamoyl phosphate.

This sequence belongs to the aspartate/ornithine carbamoyltransferase superfamily. ATCase family. Heterododecamer (2C3:3R2) of six catalytic PyrB chains organized as two trimers (C3), and six regulatory PyrI chains organized as three dimers (R2).

The catalysed reaction is carbamoyl phosphate + L-aspartate = N-carbamoyl-L-aspartate + phosphate + H(+). It participates in pyrimidine metabolism; UMP biosynthesis via de novo pathway; (S)-dihydroorotate from bicarbonate: step 2/3. Catalyzes the condensation of carbamoyl phosphate and aspartate to form carbamoyl aspartate and inorganic phosphate, the committed step in the de novo pyrimidine nucleotide biosynthesis pathway. This is Aspartate carbamoyltransferase catalytic subunit from Cronobacter sakazakii (strain ATCC BAA-894) (Enterobacter sakazakii).